Reading from the N-terminus, the 101-residue chain is MAKQSMKARDVKRAKIASKYAEKRNALKTVINDPKASDEERWEAVLKLQQLPRDASPTRQRNRCRITGRPHGFLRKFGMSRIKVREMAMRGEIPGLKKASW.

The protein belongs to the universal ribosomal protein uS14 family. As to quaternary structure, part of the 30S ribosomal subunit. Contacts proteins S3 and S10.

Its function is as follows. Binds 16S rRNA, required for the assembly of 30S particles and may also be responsible for determining the conformation of the 16S rRNA at the A site. The polypeptide is Small ribosomal subunit protein uS14 (Idiomarina loihiensis (strain ATCC BAA-735 / DSM 15497 / L2-TR)).